Here is a 571-residue protein sequence, read N- to C-terminus: Ubiquitin-like-specific protease 1C (571 aa).

The segment at 221-260 (SESKDPKGDRRPNEAYGKGKPNESSPYLLVDDDDGDDDKV) is disordered. Residues 222–233 (ESKDPKGDRRPN) show a composition bias toward basic and acidic residues. Catalysis depends on residues His426, Asp449, and Cys512.

It belongs to the peptidase C48 family.

The protein localises to the nucleus. It is found in the nucleoplasm. Protease that catalyzes two essential functions in the SUMO pathway: processing of full-length SUMOs to their mature forms and deconjugation of SUMO from targeted proteins. Cleaves precursors of SUM1 and SUM2, but not of SUM3 or SUM5. Able to release SUM1 and SUM2 from conjugates, but unable to cleave SUM3. Protease activity mainly directed at deconjugating SUM1 and SUM2 from their target proteins. Regulates salt stress responses and flowering time. Redundant with ULP1D. This is Ubiquitin-like-specific protease 1C (ULP1C) from Arabidopsis thaliana (Mouse-ear cress).